The following is an 876-amino-acid chain: Valine--tRNA ligase (876 aa).

The 'HIGH' region motif lies at Pro-44 to His-54. The 'KMSKS' region signature appears at Lys-520–Ser-524. Lys-523 contributes to the ATP binding site. The stretch at Leu-805–Ala-876 forms a coiled coil.

This sequence belongs to the class-I aminoacyl-tRNA synthetase family. ValS type 1 subfamily. Monomer.

The protein localises to the cytoplasm. The catalysed reaction is tRNA(Val) + L-valine + ATP = L-valyl-tRNA(Val) + AMP + diphosphate. Catalyzes the attachment of valine to tRNA(Val). As ValRS can inadvertently accommodate and process structurally similar amino acids such as threonine, to avoid such errors, it has a 'posttransfer' editing activity that hydrolyzes mischarged Thr-tRNA(Val) in a tRNA-dependent manner. This is Valine--tRNA ligase from Staphylococcus haemolyticus (strain JCSC1435).